Reading from the N-terminus, the 312-residue chain is Phospho-N-acetylmuramoyl-pentapeptide-transferase (312 aa).

A run of 9 helical transmembrane segments spans residues 1-21, 48-68, 76-96, 115-135, 140-160, 165-185, 214-234, 238-258, and 289-309; these read MMVV…HYSK, GVAF…FGGI, EVMI…DDFL, FPLQ…LASH, GFMS…FVMV, AFNF…IVLL, VFMG…AYAL, VWLL…VVIQ, and VTLR…WLMG.

This sequence belongs to the glycosyltransferase 4 family. MraY subfamily. It depends on Mg(2+) as a cofactor.

The protein resides in the cell membrane. The catalysed reaction is UDP-N-acetyl-alpha-D-muramoyl-L-alanyl-gamma-D-glutamyl-meso-2,6-diaminopimeloyl-D-alanyl-D-alanine + di-trans,octa-cis-undecaprenyl phosphate = di-trans,octa-cis-undecaprenyl diphospho-N-acetyl-alpha-D-muramoyl-L-alanyl-D-glutamyl-meso-2,6-diaminopimeloyl-D-alanyl-D-alanine + UMP. It functions in the pathway cell wall biogenesis; peptidoglycan biosynthesis. Catalyzes the initial step of the lipid cycle reactions in the biosynthesis of the cell wall peptidoglycan: transfers peptidoglycan precursor phospho-MurNAc-pentapeptide from UDP-MurNAc-pentapeptide onto the lipid carrier undecaprenyl phosphate, yielding undecaprenyl-pyrophosphoryl-MurNAc-pentapeptide, known as lipid I. This is Phospho-N-acetylmuramoyl-pentapeptide-transferase from Deinococcus radiodurans (strain ATCC 13939 / DSM 20539 / JCM 16871 / CCUG 27074 / LMG 4051 / NBRC 15346 / NCIMB 9279 / VKM B-1422 / R1).